Reading from the N-terminus, the 834-residue chain is DNA polymerase I, thermostable (834 aa).

Positions 176-262 (KPEQWVDFRA…DLPLEVDLAQ (87 aa)) constitute a 5'-3' exonuclease domain. The segment at 412–834 (ERLHRNLLKR…MGEDWLSAKG (423 aa)) is polymerase.

This sequence belongs to the DNA polymerase type-A family.

It catalyses the reaction DNA(n) + a 2'-deoxyribonucleoside 5'-triphosphate = DNA(n+1) + diphosphate. Has 5'-3' exonuclease activity and no 3'-5' exonuclease activity. This chain is DNA polymerase I, thermostable (polA), found in Thermus caldophilus.